A 97-amino-acid polypeptide reads, in one-letter code: Nucleoid-associated protein HPP12_0031 (97 aa).

The protein belongs to the YbaB/EbfC family. In terms of assembly, homodimer.

Its subcellular location is the cytoplasm. The protein resides in the nucleoid. Its function is as follows. Binds to DNA and alters its conformation. May be involved in regulation of gene expression, nucleoid organization and DNA protection. The protein is Nucleoid-associated protein HPP12_0031 of Helicobacter pylori (strain P12).